The chain runs to 258 residues: Imidazole glycerol phosphate synthase subunit HisF (258 aa).

Residues D11 and D130 contribute to the active site.

This sequence belongs to the HisA/HisF family. Heterodimer of HisH and HisF.

It is found in the cytoplasm. It carries out the reaction 5-[(5-phospho-1-deoxy-D-ribulos-1-ylimino)methylamino]-1-(5-phospho-beta-D-ribosyl)imidazole-4-carboxamide + L-glutamine = D-erythro-1-(imidazol-4-yl)glycerol 3-phosphate + 5-amino-1-(5-phospho-beta-D-ribosyl)imidazole-4-carboxamide + L-glutamate + H(+). It functions in the pathway amino-acid biosynthesis; L-histidine biosynthesis; L-histidine from 5-phospho-alpha-D-ribose 1-diphosphate: step 5/9. In terms of biological role, IGPS catalyzes the conversion of PRFAR and glutamine to IGP, AICAR and glutamate. The HisF subunit catalyzes the cyclization activity that produces IGP and AICAR from PRFAR using the ammonia provided by the HisH subunit. The chain is Imidazole glycerol phosphate synthase subunit HisF from Photorhabdus laumondii subsp. laumondii (strain DSM 15139 / CIP 105565 / TT01) (Photorhabdus luminescens subsp. laumondii).